A 403-amino-acid chain; its full sequence is D-mannonate dehydratase CC0532 (403 aa).

Positions 38 and 123 each coordinate substrate. Tyr160 functions as the Proton donor/acceptor in the catalytic mechanism. A Mg(2+)-binding site is contributed by Asp211. His213 (proton donor/acceptor) is an active-site residue. Mg(2+) contacts are provided by Glu237 and Glu263. Substrate contacts are provided by Glu263, Arg284, His313, Asp317, and Glu340.

Belongs to the mandelate racemase/muconate lactonizing enzyme family. GalD subfamily. It depends on Mg(2+) as a cofactor.

It catalyses the reaction D-mannonate = 2-dehydro-3-deoxy-D-gluconate + H2O. It participates in carbohydrate metabolism; pentose and glucuronate interconversion. Functionally, catalyzes the dehydration of D-mannonate. Has no detectable activity with a panel of 70 other acid sugars (in vitro). The polypeptide is D-mannonate dehydratase CC0532 (Caulobacter vibrioides (strain ATCC 19089 / CIP 103742 / CB 15) (Caulobacter crescentus)).